Here is a 492-residue protein sequence, read N- to C-terminus: E3 ubiquitin-protein ligase TRIM35 (492 aa).

Position 1 is an N-acetylmethionine (Met1). Ser4 and Ser8 each carry phosphoserine. The RING-type zinc finger occupies 21–61 (CAVCYDPFRDAVTLRCGHNFCRGCVSRCWEVQVSPTCPVCK). The B box-type zinc-finger motif lies at 96–137 (RFSRVCRLHRGQLSLFCLEDKELLCCSCQADPRHQGHRVQPV). Zn(2+) is bound by residues Cys101, His104, Cys123, and His129. A coiled-coil region spans residues 210–249 (AEETRQKQLLADEKMKQLTEETEVLAHEIERLQMEMKEDD). In terms of domain architecture, B30.2/SPRY spans 283–486 (YLGSLQYRVW…LRICPLHISV (204 aa)).

As to quaternary structure, interacts with PKM isoform M2, but not isoform M1; this interaction may compete with that between PKM and FGFR1, and hence reduces FGFR1-dependent tyrosine phosphorylation of PKM. Interacts with IRF7; this interaction promotes IRF7 proteasomal degradation. Interacts with TRAF3; this interaction promotes TRAF3 activation.

It localises to the cytoplasm. The protein resides in the nucleus. The enzyme catalyses S-ubiquitinyl-[E2 ubiquitin-conjugating enzyme]-L-cysteine + [acceptor protein]-L-lysine = [E2 ubiquitin-conjugating enzyme]-L-cysteine + N(6)-ubiquitinyl-[acceptor protein]-L-lysine.. It participates in protein modification; protein ubiquitination. In terms of biological role, E3 ubiquitin-protein ligase that participates in multiple biological processes including cell death, glucose metabolism, and in particular, the innate immune response. Mediates 'Lys-63'-linked polyubiquitination of TRAF3 thereby promoting type I interferon production via RIG-I signaling pathway. Can also catalyze 'Lys-48'-linked polyubiquitination and proteasomal degradation of viral proteins such as influenza virus PB2. Acts as a negative feedback regulator of TLR7- and TLR9-triggered signaling. Mechanistically, promotes the 'Lys-48'-linked ubiquitination of IRF7 and induces its degradation via a proteasome-dependent pathway. Reduces FGFR1-dependent tyrosine phosphorylation of PKM, inhibiting PKM-dependent lactate production, glucose metabolism, and cell growth. The sequence is that of E3 ubiquitin-protein ligase TRIM35 (TRIM35) from Pongo abelii (Sumatran orangutan).